Reading from the N-terminus, the 88-residue chain is Small ribosomal subunit protein uS15 (88 aa).

This sequence belongs to the universal ribosomal protein uS15 family. Part of the 30S ribosomal subunit. Forms a bridge to the 50S subunit in the 70S ribosome, contacting the 23S rRNA.

One of the primary rRNA binding proteins, it binds directly to 16S rRNA where it helps nucleate assembly of the platform of the 30S subunit by binding and bridging several RNA helices of the 16S rRNA. In terms of biological role, forms an intersubunit bridge (bridge B4) with the 23S rRNA of the 50S subunit in the ribosome. The sequence is that of Small ribosomal subunit protein uS15 from Mesomycoplasma flocculare (Mycoplasma flocculare).